Consider the following 179-residue polypeptide: Isopentenyl-diphosphate Delta-isomerase (179 aa).

Histidine 25 and histidine 31 together coordinate Mn(2+). The Nudix hydrolase domain maps to 29–161 (ELHRAITVYI…PEQFTAWFQL (133 aa)). Residue cysteine 66 is part of the active site. Residue cysteine 66 coordinates Mg(2+). A Mn(2+)-binding site is contributed by histidine 68. Mg(2+) is bound at residue glutamate 86. The Mn(2+) site is built by glutamate 111 and glutamate 113. The active site involves glutamate 113.

Belongs to the IPP isomerase type 1 family. Homodimer. Mg(2+) serves as cofactor. Requires Mn(2+) as cofactor.

It is found in the cytoplasm. The enzyme catalyses isopentenyl diphosphate = dimethylallyl diphosphate. The protein operates within isoprenoid biosynthesis; dimethylallyl diphosphate biosynthesis; dimethylallyl diphosphate from isopentenyl diphosphate: step 1/1. Catalyzes the 1,3-allylic rearrangement of the homoallylic substrate isopentenyl (IPP) to its highly electrophilic allylic isomer, dimethylallyl diphosphate (DMAPP). This chain is Isopentenyl-diphosphate Delta-isomerase, found in Pectobacterium atrosepticum (strain SCRI 1043 / ATCC BAA-672) (Erwinia carotovora subsp. atroseptica).